A 147-amino-acid chain; its full sequence is Myosin-ID light chain (147 aa).

EF-hand domains lie at 8–43, 79–114, and 115–147; these read EAQSEFKEGFALYDGNKDGKLEAAELANTLRWLGQN, FDEKEIIEAFQVFDKDGKGMIGASDLRHILTNLGER, and LPEEQVEEMLRQAVGSGDGAINYEPFVRNMLKK. Ca(2+)-binding residues include Asp21, Asn23, Asp25, Lys27, and Glu32.

Myosin I is a dimer of a heavy and a light chain. Inability to self-assemble into filaments. Interacts with myoD. Does not interact with myoB or myoC.

It localises to the cytoplasm. In terms of biological role, functions as the light chain for myosin-D. Has low affinity for calcium. The sequence is that of Myosin-ID light chain (mlcD) from Dictyostelium discoideum (Social amoeba).